The following is an 849-amino-acid chain: Protein translocase subunit SecA (849 aa).

ATP-binding positions include Q85, 103-107 (GEGKT), and D493. Residues C832, C834, C843, and H844 each contribute to the Zn(2+) site.

The protein belongs to the SecA family. Monomer and homodimer. Part of the essential Sec protein translocation apparatus which comprises SecA, SecYEG and auxiliary proteins SecDF. Other proteins may also be involved. Requires Zn(2+) as cofactor.

It is found in the cell membrane. The protein localises to the cytoplasm. It carries out the reaction ATP + H2O + cellular proteinSide 1 = ADP + phosphate + cellular proteinSide 2.. In terms of biological role, part of the Sec protein translocase complex. Interacts with the SecYEG preprotein conducting channel. Has a central role in coupling the hydrolysis of ATP to the transfer of proteins into and across the cell membrane, serving as an ATP-driven molecular motor driving the stepwise translocation of polypeptide chains across the membrane. The protein is Protein translocase subunit SecA of Streptococcus thermophilus (strain ATCC BAA-250 / LMG 18311).